An 819-amino-acid chain; its full sequence is Cadherin-24 (819 aa).

An N-terminal signal peptide occupies residues 1–19; the sequence is MWGLVRLLLAWLGGWGCMG. A propeptide spanning residues 21 to 44 is cleaved from the precursor; it reads LAAPARAWAGSREHPGPALLRTRR. Over 45–641 the chain is Extracellular; the sequence is SWVWNQFFVI…LSAAGLSTGA (597 aa). Cadherin domains are found at residues 46-150, 151-259, 260-374, 375-517, and 517-630; these read WVWN…PPIF, PLGP…PPKF, PQSL…PPAF, TQAA…APQL, and LAEP…WPEA. Asn-446, Asn-548, and Asn-563 each carry an N-linked (GlcNAc...) asparagine glycan. Residues 642–662 form a helical membrane-spanning segment; that stretch reads LLAIITCVGALLALVVLFVAL. Topologically, residues 663-819 are cytoplasmic; that stretch reads RRQKQEALMV…LYGAKEPPAP (157 aa). Residues 768–800 are disordered; it reads YEGRGSSCGSLSSLGSGSEAGGAPGPAEPLDDW. Positions 771–784 are enriched in low complexity; it reads RGSSCGSLSSLGSG.

Associates with alpha-, beta- and delta-catenins.

It localises to the cell membrane. Functionally, cadherins are calcium-dependent cell adhesion proteins. They preferentially interact with themselves in a homophilic manner in connecting cells; cadherins may thus contribute to the sorting of heterogeneous cell types. Cadherin-24 mediate strong cell-cell adhesion. The polypeptide is Cadherin-24 (CDH24) (Homo sapiens (Human)).